A 346-amino-acid polypeptide reads, in one-letter code: Methylthioribose-1-phosphate isomerase (346 aa).

Substrate is bound by residues 47–49 (RGA), Arg88, and Gln195. Catalysis depends on Asp236, which acts as the Proton donor. Residue 246–247 (NK) coordinates substrate.

It belongs to the eIF-2B alpha/beta/delta subunits family. MtnA subfamily.

It carries out the reaction 5-(methylsulfanyl)-alpha-D-ribose 1-phosphate = 5-(methylsulfanyl)-D-ribulose 1-phosphate. It participates in amino-acid biosynthesis; L-methionine biosynthesis via salvage pathway; L-methionine from S-methyl-5-thio-alpha-D-ribose 1-phosphate: step 1/6. In terms of biological role, catalyzes the interconversion of methylthioribose-1-phosphate (MTR-1-P) into methylthioribulose-1-phosphate (MTRu-1-P). In Maridesulfovibrio salexigens (strain ATCC 14822 / DSM 2638 / NCIMB 8403 / VKM B-1763) (Desulfovibrio salexigens), this protein is Methylthioribose-1-phosphate isomerase.